The following is a 366-amino-acid chain: Lysophosphatidic acid receptor 1-B (366 aa).

Residues 1-52 (MTSLSEFVSEPIGMMSQTSAASESQCYYNETIAFFYNRSGKYLDTEWNAVSK) are Extracellular-facing. Disulfide bonds link Cys-26/Cys-192 and Cys-190/Cys-197. Asn-29 and Asn-37 each carry an N-linked (GlcNAc...) asparagine glycan. Lys-41 contributes to the a 1-acyl-sn-glycero-3-phosphate binding site. The helical transmembrane segment at 53–77 (LVMGLGITVCIFIMLANLLVMVAIY) threads the bilayer. Topologically, residues 78-85 (VNRRFHFP) are cytoplasmic. A helical transmembrane segment spans residues 86-109 (IYYLMANLAAADFFAGLAYFYLMF). Topologically, residues 110-123 (NTGPNTRRLTVSTW) are extracellular. The chain crosses the membrane as a helical span at residues 124 to 146 (LLRQGLIDTSLTASVANLLAIAI). 126-131 (RQGLID) provides a ligand contact to a 1-acyl-sn-glycero-3-phosphate. At 147-165 (ERHITVFRMQLHTRMSNRR) the chain is on the cytoplasmic side. A helical transmembrane segment spans residues 166–186 (VVVVIVVIWTVAIVMGAIPSV). Topologically, residues 187 to 206 (GWNCICDLEHCSNMAPLYSD) are extracellular. The chain crosses the membrane as a helical span at residues 207–227 (SYLIFWTIFNLVTFVVMVVLY). Position 212 (Trp-212) interacts with a 1-acyl-sn-glycero-3-phosphate. The Cytoplasmic portion of the chain corresponds to 228–257 (AHIFVYVRQRTMRMSRHSSGPRRNRDTMMS). A helical membrane pass occupies residues 258–282 (LLKTVVIVLGAFIVCWTPGLVLLLL). Residues 283-296 (DVCCPQCNILAYEK) are Extracellular-facing. The cysteines at positions 286 and 289 are disulfide-linked. Residues 297 to 317 (FFLLLAEFNSAMNPIIYSYRD) traverse the membrane as a helical segment. Residues 318 to 366 (KEMSATFKQILCCQRTENVNGPTEGSDRSASSLNHTILAGVHSNDHSVV) are Cytoplasmic-facing.

The protein belongs to the G-protein coupled receptor 1 family. In terms of tissue distribution, expressed at high levels in oocytes and at lower levels in brain and spinal cord. Below detection level in lung, heart, kidney, liver, muscle, stomach, and intestine.

The protein resides in the cell surface. It is found in the cell membrane. The protein localises to the endosome. Functionally, receptor for lysophosphatidic acid (LPA). Plays a role in the reorganization of the actin cytoskeleton, cell migration, differentiation and proliferation, and thereby contributes to the responses to tissue damage and infectious agents. Activates downstream signaling cascades via the G(i)/G(o), G(12)/G(13), and G(q) families of heteromeric G proteins. Signaling inhibits adenylyl cyclase activity and decreases cellular cAMP levels. Signaling triggers an increase of cytoplasmic Ca(2+) levels. Signaling leads to the activation of phospholipase C (PLC) and the formation of inositol 1,4,5-trisphosphate. Signaling mediates activation of down-stream MAP kinases. Contributes to the regulation of cell shape. Promotes Rho-dependent reorganization of the actin cytoskeleton in neuronal cells and neurite retraction. Promotes the activation of Rho and the formation of actin stress fibers. Promotes formation of lamellipodia at the leading edge of migrating cells via activation of Rac. Through its function as lysophosphatidic acid receptor, plays a role in chemotaxis and cell migration, including responses to injury and wounding. Promotes cell proliferation in response to lysophosphatidic acid. The polypeptide is Lysophosphatidic acid receptor 1-B (lpar1-b) (Xenopus laevis (African clawed frog)).